The chain runs to 852 residues: Thrombospondin type-1 domain-containing protein 1 (852 aa).

The first 24 residues, 1 to 24 (MKPMLKDFSNLLLVVLCDYVLGEA), serve as a signal peptide directing secretion. Residues 25–413 (EYLLLREPGH…QPQGPVKSNN (389 aa)) lie on the Extracellular side of the membrane. N-linked (GlcNAc...) asparagine glycosylation is found at Asn39, Asn53, Asn58, Asn69, Asn80, Asn135, and Asn304. Positions 340 to 393 (TETWGLWQPWSQCSATCGDGVRERRRVCLTSFPSSPVCPGMSLEASLCSLEECA) constitute a TSP type-1 domain. Intrachain disulfides connect Cys352/Cys387, Cys356/Cys392, and Cys367/Cys377. Residues 414–434 (IVTVTGISLCLFIIIATVLIT) traverse the membrane as a helical segment. Residues 435 to 852 (LWRRFGRPAK…STLSVEKLVI (418 aa)) lie on the Cytoplasmic side of the membrane. Disordered stretches follow at residues 444–517 (KCST…ESFQ) and 624–799 (LIRK…RKDK). Ser463 is modified (phosphoserine). Positions 645–654 (ARNAHFRRTA) are enriched in basic residues. The segment covering 655–669 (SFHEARQARPFRERS) has biased composition (basic and acidic residues). Polar residues predominate over residues 670–685 (MSTLTPRQAPAYSSRT). The span at 686–696 (RTCEQAEDRFR) shows a compositional bias: basic and acidic residues. 2 stretches are compositionally biased toward polar residues: residues 766 to 778 (SHKSVSRKQSSPI) and 785 to 794 (QRVSSLSPSQ).

In terms of assembly, part of a complex composed of THSD1, PTK2/FAK1, TLN1 and VCL. Interacts with TLN1.

Its subcellular location is the endosome membrane. It localises to the cell junction. The protein resides in the focal adhesion. The protein localises to the membrane. It is found in the secreted. Is a positive regulator of nascent focal adhesion assembly, involved in the modulation of endothelial cell attachment to the extracellular matrix. In Homo sapiens (Human), this protein is Thrombospondin type-1 domain-containing protein 1 (THSD1).